The chain runs to 421 residues: Gamma-glutamyl phosphate reductase (421 aa).

Belongs to the gamma-glutamyl phosphate reductase family.

The protein localises to the cytoplasm. The catalysed reaction is L-glutamate 5-semialdehyde + phosphate + NADP(+) = L-glutamyl 5-phosphate + NADPH + H(+). It participates in amino-acid biosynthesis; L-proline biosynthesis; L-glutamate 5-semialdehyde from L-glutamate: step 2/2. Catalyzes the NADPH-dependent reduction of L-glutamate 5-phosphate into L-glutamate 5-semialdehyde and phosphate. The product spontaneously undergoes cyclization to form 1-pyrroline-5-carboxylate. The chain is Gamma-glutamyl phosphate reductase from Nocardia farcinica (strain IFM 10152).